A 103-amino-acid chain; its full sequence is Histone H4 (103 aa).

Residues Met-1–Gly-14 are compositionally biased toward gly residues. The segment at Met-1–Arg-20 is disordered. Ser-2 bears the N-acetylserine mark. Residues Lys-6 and Lys-13 each carry the N6-acetyl-N6-methyllysine; alternate modification. Lys-17 carries the N6-acetyllysine modification. Residues Lys-17 to Lys-21 mediate DNA binding. Position 21 is an N6-methyllysine (Lys-21).

Belongs to the histone H4 family. The nucleosome is a histone octamer containing two molecules each of H2A, H2B, H3 and H4 assembled in one H3-H4 heterotetramer and two H2A-H2B heterodimers. The octamer wraps approximately 147 bp of DNA.

The protein localises to the nucleus. It is found in the chromosome. Functionally, core component of nucleosome. Nucleosomes wrap and compact DNA into chromatin, limiting DNA accessibility to the cellular machineries which require DNA as a template. Histones thereby play a central role in transcription regulation, DNA repair, DNA replication and chromosomal stability. DNA accessibility is regulated via a complex set of post-translational modifications of histones, also called histone code, and nucleosome remodeling. In Ascaris suum (Pig roundworm), this protein is Histone H4.